The sequence spans 207 residues: MDEERLSDNVRLYKGGSIRQGLRSFAAVYVLLALSFLLLTLLSSVSLARIAALSSKLSTLQSEPKHNFSSRDSLLFPCGAQSRQWEYFEGRCYYFSLSRMSWHKAKAECEEMHSHLIIIDSYAKQNFVMFRTRNERFWIGLTDENQEGEWQWVDGTDTRSSFTFWKEGEPNNRGFNEDCAHVWTSGQWNDVYCTYECYYVCEKPLPK.

At M1 the chain carries N-acetylmethionine. Residues 1–23 (MDEERLSDNVRLYKGGSIRQGLR) are Cytoplasmic-facing. The helical; Signal-anchor for type II membrane protein transmembrane segment at 24–48 (SFAAVYVLLALSFLLLTLLSSVSLA) threads the bilayer. Residues 49-207 (RIAALSSKLS…YYVCEKPLPK (159 aa)) lie on the Extracellular side of the membrane. The N-linked (GlcNAc...) asparagine glycan is linked to N67. In terms of domain architecture, C-type lectin spans 77 to 203 (PCGAQSRQWE…TYECYYVCEK (127 aa)). Cystine bridges form between C78-C92, C109-C201, and C179-C193.

Some or all of the cysteines are involved in disulfide bonds.

The protein resides in the membrane. In terms of biological role, hepatic lectin is a membrane receptor protein that recognizes and binds exposed N-acetylglucosamine moieties of plasma glycoproteins, thus mediating their clearance (from the circulation) and endocytosis. The protein is Hepatic lectin of Gallus gallus (Chicken).